The primary structure comprises 726 residues: Probable dipeptidyl-peptidase 5 (726 aa).

The first 19 residues, 1 to 19, serve as a signal peptide directing secretion; that stretch reads MAAAKWLIASLAFASSGLA. Asparagine 96 and asparagine 252 each carry an N-linked (GlcNAc...) asparagine glycan. Residues 269–291 form a disordered region; sequence AEPINKRNGPRTPQGIEGASSSP. Serine 558 (charge relay system) is an active-site residue. Asparagine 605 carries an N-linked (GlcNAc...) asparagine glycan. Catalysis depends on charge relay system residues aspartate 641 and histidine 673. The N-linked (GlcNAc...) asparagine glycan is linked to asparagine 699.

This sequence belongs to the peptidase S9C family.

It is found in the secreted. Extracellular dipeptidyl-peptidase which removes N-terminal dipeptides sequentially from polypeptides having unsubstituted N-termini. Contributes to pathogenicity. The protein is Probable dipeptidyl-peptidase 5 (DPP5) of Trichophyton verrucosum (strain HKI 0517).